A 343-amino-acid polypeptide reads, in one-letter code: tRNA N6-adenosine threonylcarbamoyltransferase (343 aa).

His116 and His120 together coordinate Fe cation. Residues 138 to 142 (LVSGG), Asp171, Gly184, Asp188, and Asn277 each bind substrate. Asp306 is a Fe cation binding site.

The protein belongs to the KAE1 / TsaD family. The cofactor is Fe(2+).

Its subcellular location is the cytoplasm. The catalysed reaction is L-threonylcarbamoyladenylate + adenosine(37) in tRNA = N(6)-L-threonylcarbamoyladenosine(37) in tRNA + AMP + H(+). Functionally, required for the formation of a threonylcarbamoyl group on adenosine at position 37 (t(6)A37) in tRNAs that read codons beginning with adenine. Is involved in the transfer of the threonylcarbamoyl moiety of threonylcarbamoyl-AMP (TC-AMP) to the N6 group of A37, together with TsaE and TsaB. TsaD likely plays a direct catalytic role in this reaction. This chain is tRNA N6-adenosine threonylcarbamoyltransferase, found in Ligilactobacillus salivarius (strain UCC118) (Lactobacillus salivarius).